Consider the following 305-residue polypeptide: UDP-3-O-acyl-N-acetylglucosamine deacetylase (305 aa).

The Zn(2+) site is built by histidine 77, histidine 234, and aspartate 238. Histidine 261 acts as the Proton donor in catalysis.

Belongs to the LpxC family. Zn(2+) is required as a cofactor.

The enzyme catalyses a UDP-3-O-[(3R)-3-hydroxyacyl]-N-acetyl-alpha-D-glucosamine + H2O = a UDP-3-O-[(3R)-3-hydroxyacyl]-alpha-D-glucosamine + acetate. It functions in the pathway glycolipid biosynthesis; lipid IV(A) biosynthesis; lipid IV(A) from (3R)-3-hydroxytetradecanoyl-[acyl-carrier-protein] and UDP-N-acetyl-alpha-D-glucosamine: step 2/6. Its function is as follows. Catalyzes the hydrolysis of UDP-3-O-myristoyl-N-acetylglucosamine to form UDP-3-O-myristoylglucosamine and acetate, the committed step in lipid A biosynthesis. In Oleidesulfovibrio alaskensis (strain ATCC BAA-1058 / DSM 17464 / G20) (Desulfovibrio alaskensis), this protein is UDP-3-O-acyl-N-acetylglucosamine deacetylase.